The primary structure comprises 163 residues: NADH-quinone oxidoreductase subunit I (163 aa).

4Fe-4S ferredoxin-type domains follow at residues 55–84 and 94–123; these read RRYP…IDAE and TRYD…EGPN. [4Fe-4S] cluster is bound by residues Cys64, Cys67, Cys70, Cys74, Cys103, Cys106, Cys109, and Cys113.

This sequence belongs to the complex I 23 kDa subunit family. As to quaternary structure, NDH-1 is composed of 14 different subunits. Subunits NuoA, H, J, K, L, M, N constitute the membrane sector of the complex. Requires [4Fe-4S] cluster as cofactor.

It localises to the cell inner membrane. The enzyme catalyses a quinone + NADH + 5 H(+)(in) = a quinol + NAD(+) + 4 H(+)(out). NDH-1 shuttles electrons from NADH, via FMN and iron-sulfur (Fe-S) centers, to quinones in the respiratory chain. The immediate electron acceptor for the enzyme in this species is believed to be ubiquinone. Couples the redox reaction to proton translocation (for every two electrons transferred, four hydrogen ions are translocated across the cytoplasmic membrane), and thus conserves the redox energy in a proton gradient. This Rhodobacter capsulatus (Rhodopseudomonas capsulata) protein is NADH-quinone oxidoreductase subunit I (nuoI).